The sequence spans 224 residues: UPF0758 protein Noc_0236 (224 aa).

An MPN domain is found at 102 to 224; that stretch reads VLTDPQTTQR…TLSFAERGLL (123 aa). Zn(2+) contacts are provided by His-173, His-175, and Asp-186. The JAMM motif motif lies at 173–186; it reads HNHPSGVAEPSRAD.

Belongs to the UPF0758 family.

The sequence is that of UPF0758 protein Noc_0236 from Nitrosococcus oceani (strain ATCC 19707 / BCRC 17464 / JCM 30415 / NCIMB 11848 / C-107).